The primary structure comprises 238 residues: Pyridoxine 5'-phosphate synthase (238 aa).

A 3-amino-2-oxopropyl phosphate-binding site is contributed by Asn-7. Residue 9–10 (DH) coordinates 1-deoxy-D-xylulose 5-phosphate. Arg-18 contributes to the 3-amino-2-oxopropyl phosphate binding site. His-43 acts as the Proton acceptor in catalysis. 1-deoxy-D-xylulose 5-phosphate-binding residues include Arg-45 and His-50. The Proton acceptor role is filled by Glu-70. Thr-100 contributes to the 1-deoxy-D-xylulose 5-phosphate binding site. His-190 (proton donor) is an active-site residue. 3-amino-2-oxopropyl phosphate contacts are provided by residues Gly-191 and 212–213 (GH).

The protein belongs to the PNP synthase family. Homooctamer; tetramer of dimers.

It localises to the cytoplasm. It carries out the reaction 3-amino-2-oxopropyl phosphate + 1-deoxy-D-xylulose 5-phosphate = pyridoxine 5'-phosphate + phosphate + 2 H2O + H(+). It functions in the pathway cofactor biosynthesis; pyridoxine 5'-phosphate biosynthesis; pyridoxine 5'-phosphate from D-erythrose 4-phosphate: step 5/5. In terms of biological role, catalyzes the complicated ring closure reaction between the two acyclic compounds 1-deoxy-D-xylulose-5-phosphate (DXP) and 3-amino-2-oxopropyl phosphate (1-amino-acetone-3-phosphate or AAP) to form pyridoxine 5'-phosphate (PNP) and inorganic phosphate. In Prochlorococcus marinus (strain MIT 9215), this protein is Pyridoxine 5'-phosphate synthase.